A 628-amino-acid chain; its full sequence is Nucleoside-triphosphatase 1 (628 aa).

A signal peptide spans 1-25 (MWLPVYVPLLLVFGVSLSLPQGSLG). The active-site Proton acceptor is Glu236. The N-linked (GlcNAc...) asparagine glycan is linked to Asn432.

This sequence belongs to the GDA1/CD39 NTPase family. Homotetramer.

The protein localises to the secreted. It localises to the parasitophorous vacuole. The catalysed reaction is a ribonucleoside 5'-triphosphate + H2O = a ribonucleoside 5'-diphosphate + phosphate + H(+). May perform an important processing step in the conversion of high energy nucleotides prior to uptake by the parasite and may contribute to intracellular survival and virulence. NTPAse-I has a specific activity 4.5-fold higher than NTPAse-II in hydrolysis of ATP. The primary difference between these isozymes lies in their ability to hydrolyze nucleoside triphosphate versus diphosphate substrates. While NTPAse-II hydrolyzes ATP to ADP and ADP to AMP at almost the same rate, NTPAse-I hydrolyzes ADP to AMP at a much slower rate (0.7% of the rate for ATP). The protein is Nucleoside-triphosphatase 1 (NTP3) of Toxoplasma gondii.